The sequence spans 389 residues: GTPase Obg (389 aa).

The region spanning 1–159 is the Obg domain; the sequence is MKFVDEAVIK…RELRLELLLL (159 aa). Positions 160–333 constitute an OBG-type G domain; the sequence is ADVGMLGLPN…LCYKLADFME (174 aa). Residues 166–173, 191–195, 213–216, 283–286, and 314–316 contribute to the GTP site; these read GLPNAGKS, FTTLI, DIPG, NKVD, and SAV. Positions 173 and 193 each coordinate Mg(2+). A disordered region spans residues 359 to 389; that stretch reads NQGEVITEDDDDDWDDWDDEEDDGHVIYVRE. The span at 364-381 shows a compositional bias: acidic residues; the sequence is ITEDDDDDWDDWDDEEDD.

The protein belongs to the TRAFAC class OBG-HflX-like GTPase superfamily. OBG GTPase family. In terms of assembly, monomer. It depends on Mg(2+) as a cofactor.

The protein resides in the cytoplasm. An essential GTPase which binds GTP, GDP and possibly (p)ppGpp with moderate affinity, with high nucleotide exchange rates and a fairly low GTP hydrolysis rate. Plays a role in control of the cell cycle, stress response, ribosome biogenesis and in those bacteria that undergo differentiation, in morphogenesis control. The polypeptide is GTPase Obg (Vibrio vulnificus (strain CMCP6)).